Reading from the N-terminus, the 443-residue chain is Threonine/serine transporter TdcC (443 aa).

Transmembrane regions (helical) follow at residues 22 to 42 (TTWT…FFPI), 44 to 64 (AGFG…PIAF), 97 to 117 (GVVI…IYGV), 140 to 160 (FVAL…KDLM), 163 to 183 (VMSY…LSLI), 207 to 227 (ILVT…FSPI), 259 to 279 (ASML…FTLS), 319 to 339 (ASII…LGTL), 366 to 386 (ISMI…PNIL), 389 to 409 (IEAM…MYAI), and 423 to 443 (DNVF…YKLF).

Belongs to the amino acid/polyamine transporter 2 family. SdaC/TdcC subfamily.

Its subcellular location is the cell inner membrane. It carries out the reaction L-threonine(in) + H(+)(in) = L-threonine(out) + H(+)(out). The catalysed reaction is L-serine(in) + H(+)(in) = L-serine(out) + H(+)(out). Its function is as follows. Involved in the import of threonine and serine into the cell, with the concomitant import of a proton (symport system). The protein is Threonine/serine transporter TdcC of Salmonella paratyphi A (strain ATCC 9150 / SARB42).